A 378-amino-acid chain; its full sequence is MTTQFSVAGVELELLRYPAQQESNLQAWDAADEHLLKSLIESEQAAVPTAIINDSFGALSCGVSKLNPSWPLCVETDARTSFLGTEQNHGRNQLPLDNLQWFTSRDTLPENLALVLMKLPKNLSYFAHQLTRLSQVLPAGTRILVAAKAKSINGALLDVFGNHLGPASASLAWKNTRVITCVSDGKPRPLAKEVTWAVPEYQLEISNLSNVFAANKLDIGARIMLENLPKGDFKSIVDLGCGNGVLGLRTAQLFPEADIHFIDDSEMAVASAKANWARNQLPADKGHFYWDDCMTHLPEEVQPDLVLCNPPFHQGEAITDHIAWQMFLDARRRLKDGGILHIVGNRHLAYHVKLQRLFKNCTTVASNGKFVILQAQKK.

The protein belongs to the methyltransferase superfamily. RlmG family.

It localises to the cytoplasm. The enzyme catalyses guanosine(1835) in 23S rRNA + S-adenosyl-L-methionine = N(2)-methylguanosine(1835) in 23S rRNA + S-adenosyl-L-homocysteine + H(+). Specifically methylates the guanine in position 1835 (m2G1835) of 23S rRNA. The chain is Ribosomal RNA large subunit methyltransferase G from Shewanella baltica (strain OS185).